The primary structure comprises 699 residues: Serine/threonine-protein kinase PRR2 (699 aa).

A disordered region spans residues 168–193 (SSTKKNLANDISDNKHNNNSSNTIGH). A compositionally biased stretch (polar residues) spans 184 to 193 (NNNSSNTIGH). The 293-residue stretch at 361–653 (RDLDVVLGEG…INGILQDGWI (293 aa)) folds into the Protein kinase domain. ATP is bound by residues 367–375 (LGEGSGGKV) and Lys390. Residue Asp484 is the Proton acceptor of the active site.

This sequence belongs to the protein kinase superfamily. Ser/Thr protein kinase family.

The catalysed reaction is L-seryl-[protein] + ATP = O-phospho-L-seryl-[protein] + ADP + H(+). It catalyses the reaction L-threonyl-[protein] + ATP = O-phospho-L-threonyl-[protein] + ADP + H(+). Protein kinase that functions as a regulator in the pheromone-induced mating pathway downstream of mitogen-activated protein kinase (MAPK) FUS3. Diminishes transcriptional induction of genes in response to pheromone signaling. The polypeptide is Serine/threonine-protein kinase PRR2 (PRR2) (Saccharomyces cerevisiae (strain ATCC 204508 / S288c) (Baker's yeast)).